The following is a 293-amino-acid chain: MMKRIFLFIVTNLAILLMLSITLRLLGVDRILDAEGSELNFNALLVFSAVLGFGGSLISLAMSKWSAKHMTGAMVIDVPSNSTEGWLVETVRRQAKAAGIGMPEVAIYDSPDINAFATGMNRNNALVAVSTGLLQKMNRDEAEAVLAHEVSHVANGDMVTLALIQGVVNTFVIFLSRIIGHIVDRAVFKSEEGHGPAYFVTSLIAQMVLGILATIIVMWFSRQREFRADAGSAQISGRNKMVAALRRLQQEYEPSHLPDKIAAFGISGQKSQIGRLFMSHPPLEERIQALQSA.

The next 2 membrane-spanning stretches (helical) occupy residues 5 to 25 and 43 to 63; these read IFLF…TLRL and ALLV…LAMS. His148 contributes to the Zn(2+) binding site. Residue Glu149 is part of the active site. His152 contacts Zn(2+). 2 consecutive transmembrane segments (helical) span residues 159–179 and 199–219; these read VTLA…SRII and FVTS…IVMW. Position 225 (Glu225) interacts with Zn(2+).

Belongs to the peptidase M48B family. It depends on Zn(2+) as a cofactor.

It localises to the cell inner membrane. The chain is Protease HtpX homolog from Nitrosomonas europaea (strain ATCC 19718 / CIP 103999 / KCTC 2705 / NBRC 14298).